We begin with the raw amino-acid sequence, 215 residues long: uncharacterized protein (215 aa).

This is an uncharacterized protein from Saccharomyces cerevisiae (strain ATCC 204508 / S288c) (Baker's yeast).